The following is a 110-amino-acid chain: Phosphoribosyl-ATP pyrophosphatase (110 aa).

The protein belongs to the PRA-PH family.

It localises to the cytoplasm. It carries out the reaction 1-(5-phospho-beta-D-ribosyl)-ATP + H2O = 1-(5-phospho-beta-D-ribosyl)-5'-AMP + diphosphate + H(+). The protein operates within amino-acid biosynthesis; L-histidine biosynthesis; L-histidine from 5-phospho-alpha-D-ribose 1-diphosphate: step 2/9. The sequence is that of Phosphoribosyl-ATP pyrophosphatase from Pseudomonas syringae pv. syringae (strain B728a).